Consider the following 442-residue polypeptide: Serine--tRNA ligase (442 aa).

Residue 249–251 (TSE) coordinates L-serine. 280-282 (RSE) lines the ATP pocket. Glutamate 303 is a binding site for L-serine. 367-370 (EISS) serves as a coordination point for ATP. Residue serine 402 coordinates L-serine.

The protein belongs to the class-II aminoacyl-tRNA synthetase family. Type-1 seryl-tRNA synthetase subfamily. In terms of assembly, homodimer. The tRNA molecule binds across the dimer.

The protein resides in the cytoplasm. It catalyses the reaction tRNA(Ser) + L-serine + ATP = L-seryl-tRNA(Ser) + AMP + diphosphate + H(+). It carries out the reaction tRNA(Sec) + L-serine + ATP = L-seryl-tRNA(Sec) + AMP + diphosphate + H(+). The protein operates within aminoacyl-tRNA biosynthesis; selenocysteinyl-tRNA(Sec) biosynthesis; L-seryl-tRNA(Sec) from L-serine and tRNA(Sec): step 1/1. Functionally, catalyzes the attachment of serine to tRNA(Ser). Is also able to aminoacylate tRNA(Sec) with serine, to form the misacylated tRNA L-seryl-tRNA(Sec), which will be further converted into selenocysteinyl-tRNA(Sec). In Acidovorax sp. (strain JS42), this protein is Serine--tRNA ligase.